Consider the following 267-residue polypeptide: Tryptophan synthase alpha chain (267 aa).

Residues Glu47 and Asp58 each act as proton acceptor in the active site.

It belongs to the TrpA family. In terms of assembly, tetramer of two alpha and two beta chains.

It catalyses the reaction (1S,2R)-1-C-(indol-3-yl)glycerol 3-phosphate + L-serine = D-glyceraldehyde 3-phosphate + L-tryptophan + H2O. It participates in amino-acid biosynthesis; L-tryptophan biosynthesis; L-tryptophan from chorismate: step 5/5. Its function is as follows. The alpha subunit is responsible for the aldol cleavage of indoleglycerol phosphate to indole and glyceraldehyde 3-phosphate. This is Tryptophan synthase alpha chain from Chlorobium phaeovibrioides (strain DSM 265 / 1930) (Prosthecochloris vibrioformis (strain DSM 265)).